The primary structure comprises 115 residues: MSIKVEWIKFTRLKKCATLLVQLSLLRYRYMVLAYNHKFDCIVVTIYCGCLFWFSNGALFTEGKARDRGRWAKATMKKNYGVKLKIFLFTILLAFETNTFTPYTSTFSHFARGCL.

An N-terminal signal peptide occupies residues 1 to 34; the sequence is MSIKVEWIKFTRLKKCATLLVQLSLLRYRYMVLA. The next 2 membrane-spanning stretches (helical) occupy residues 41 to 60 and 81 to 103; these read CIVV…GALF and GVKL…FTPY.

The protein localises to the membrane. Functionally, has a role in meiosis. This chain is Meiotically up-regulated gene 106 protein (mug106), found in Schizosaccharomyces pombe (strain 972 / ATCC 24843) (Fission yeast).